A 552-amino-acid chain; its full sequence is Cochlin (552 aa).

Positions 1–26 are cleaved as a signal peptide; sequence MPSSRIPALCLGAWLLLLLLPRFARA. Residues 30–123 form the LCCL domain; sequence VPIPVTCFTR…QMLSRWSASF (94 aa). 2 cysteine pairs are disulfide-bonded: Cys36-Cys52 and Cys56-Cys76. Asn102 carries an N-linked (GlcNAc...) asparagine glycan. The interval 129-161 is disordered; the sequence is KSSTQEATGRAVSTAHPPSGKRLKKTPEKKTGN. VWFA domains follow at residues 167–352 and 369–539; these read DIAF…VQKL and NIAF…VSDV. N-linked (GlcNAc...) asparagine glycosylation is present at Asn223.

As to quaternary structure, monomer. May form homodimer. Interacts with type II collagen. Interacts with SLC44A2. Interacts with ANXA2. Post-translationally, N-glycosylated. As to expression, expressed in inner ear structures.

The protein localises to the secreted. Its subcellular location is the extracellular space. In terms of biological role, plays a role in the control of cell shape and motility in the trabecular meshwork. The polypeptide is Cochlin (Coch) (Mus musculus (Mouse)).